Reading from the N-terminus, the 157-residue chain is Peptide methionine sulfoxide reductase MsrA (157 aa).

Cys10 is a catalytic residue.

The protein belongs to the MsrA Met sulfoxide reductase family.

It carries out the reaction L-methionyl-[protein] + [thioredoxin]-disulfide + H2O = L-methionyl-(S)-S-oxide-[protein] + [thioredoxin]-dithiol. It catalyses the reaction [thioredoxin]-disulfide + L-methionine + H2O = L-methionine (S)-S-oxide + [thioredoxin]-dithiol. Has an important function as a repair enzyme for proteins that have been inactivated by oxidation. Catalyzes the reversible oxidation-reduction of methionine sulfoxide in proteins to methionine. This chain is Peptide methionine sulfoxide reductase MsrA, found in Clostridium perfringens (strain SM101 / Type A).